The sequence spans 941 residues: MSEYKHTLNLPHTEFPMRARLAEREPQRLQRWEEEDLYGAIRRARAGRERFILHDGPPYANGDIHIGHAVNKILKDIIVKARTLDGYDAPYIPGWDCHGLPIEHKVEEQAGKPGAELTYAQFRERCRAFAAEQVEGQRQDFKRLGVLGDWERPYLTMDYATEAGILRALARIFEGGHVTQGFKPVHWCADCGSALAEAEVEYEERTSPAVDVRFAVVDELALQQRVLLEGEGVQAGTASVVIWTTTPWTLPANRAVAVHPELEYVVVALDHSERLVLAAELLEATLQRAGVECYEVVGRCRGADLEGLSLQHPFLDRQVPVVLGEHVTTDGGTGCVHTAPGHGQEDFEVGQCYGLEVTNPVDGAGCFFEDTEHFAGLNVFDANPRVVEVLESRGALFHHEKYRHSYPHCWRHKTPVIFRATPQWFIDLDRHGMRECALAGIEGVRWMPDWGQARIDAMVRGRPDWCISRQRHWGVPIAVFIHRRSGEPHPQTPQHMEAVAARMEHEGLEAWWDLDPAELLGDEAAEYEKVTDILDVWFDSGVTHATVLEQREGLQVPADLYLEGSDQHRGWFQSSLLSSAAIRQAAPYRGVLTHGFTVDEQGHKMSKSRGNVVAPQDVMDRLGADILRLWVASADYSGEIAVSDNILQRTADAYRRMRNTARFLLGNLHGFEPGRDALVAEQLLPLDRWAVARTRALQERIVAAYDRYELHRIYHLLHNFCVVDMGGFYLDVLKDRLYTTPADSRARRSGQTAMYHIAEALVRWLAPILSFTADEIWGHLPGERREPVFTAEWYDGLFPLDDEPAEAAFWDRVMEVRTAVSRELERLRNEKVIGANLDAEVDLYVSSALAEELAPLGDELRFVLITSAARIHAATEAPVDAASATLEDGSEVRIAVAASAHDKCPRCWHRSPDIGASDEHPELCGRCVENVAGSGEYRATA.

The 'HIGH' region signature appears at 58–68 (PYANGDIHIGH). E563 contributes to the L-isoleucyl-5'-AMP binding site. The short motif at 604-608 (KMSKS) is the 'KMSKS' region element. K607 is a binding site for ATP. Zn(2+) contacts are provided by C904, C907, C924, and C927.

This sequence belongs to the class-I aminoacyl-tRNA synthetase family. IleS type 1 subfamily. As to quaternary structure, monomer. Requires Zn(2+) as cofactor.

Its subcellular location is the cytoplasm. The catalysed reaction is tRNA(Ile) + L-isoleucine + ATP = L-isoleucyl-tRNA(Ile) + AMP + diphosphate. In terms of biological role, catalyzes the attachment of isoleucine to tRNA(Ile). As IleRS can inadvertently accommodate and process structurally similar amino acids such as valine, to avoid such errors it has two additional distinct tRNA(Ile)-dependent editing activities. One activity is designated as 'pretransfer' editing and involves the hydrolysis of activated Val-AMP. The other activity is designated 'posttransfer' editing and involves deacylation of mischarged Val-tRNA(Ile). The sequence is that of Isoleucine--tRNA ligase from Halorhodospira halophila (strain DSM 244 / SL1) (Ectothiorhodospira halophila (strain DSM 244 / SL1)).